The following is a 1370-amino-acid chain: DNA-directed RNA polymerase subunit beta (1370 aa).

Belongs to the RNA polymerase beta chain family. In terms of assembly, the RNAP catalytic core consists of 2 alpha, 1 beta, 1 beta' and 1 omega subunit. When a sigma factor is associated with the core the holoenzyme is formed, which can initiate transcription.

It carries out the reaction RNA(n) + a ribonucleoside 5'-triphosphate = RNA(n+1) + diphosphate. Its function is as follows. DNA-dependent RNA polymerase catalyzes the transcription of DNA into RNA using the four ribonucleoside triphosphates as substrates. The protein is DNA-directed RNA polymerase subunit beta of Delftia acidovorans (strain DSM 14801 / SPH-1).